Reading from the N-terminus, the 711-residue chain is Pentatricopeptide repeat-containing protein At5g46580, chloroplastic (711 aa).

Residues 1-43 (MATVLTTAIDVCFNPQNSDTKKHSLFLKPSLFRQSRSRKLNIS) constitute a chloroplast transit peptide. 10 PPR repeats span residues 185–219 (ETIF…GVEL), 220–254 (DNIT…GLMP), 255–289 (DEVT…GWKP), 290–324 (DAIA…DVKP), 325–359 (NVVV…GLTP), 360–394 (NEKT…KWPM), 395–425 (DFIL…MKES), 431–465 (DNFS…GVQV), 466–500 (NVMG…GVKP), and 501–535 (DDRL…NKKL). One can recognise a Smr domain in the interval 614–696 (LDVRSLSVGA…IFVATKEDLV (83 aa)).

The protein belongs to the PPR family. P subfamily.

It is found in the plastid. It localises to the chloroplast. This chain is Pentatricopeptide repeat-containing protein At5g46580, chloroplastic, found in Arabidopsis thaliana (Mouse-ear cress).